A 494-amino-acid polypeptide reads, in one-letter code: NADH-ubiquinone oxidoreductase chain 4 (494 aa).

14 helical membrane-spanning segments follow: residues 6–26 (IMIYLFSLLLIPLIVYFLLIY), 41–61 (TIGLTTLIINLILSMIIFILF), 87–107 (IDGISIYFLLLTTMIMPISLV), 118–138 (VLSFVIIILLLETLLLAVFLV), 141–161 (ILLFYIFFESILPPLFLLIGL), 172–192 (FYLFLYTLLGSLFMLLSIITM), 207–227 (ANFSYITQLFLFYGIFISFAV), 246–266 (PLAGSVILAGIVWKLRWYGIF), 280–300 (YTYIVYVIGVITIFYTSFSTL), 302–322 (TIAIKELIAYSSVSHAAVYLL), 336–356 (IALGLAHGFVSSGLFICVGGI), 375–395 (LMPIFCILFLYITLGNCGSPL), 415–435 (VLGVLASTSIVFSAAYTIFMF), and 460–480 (FILLISLVVPAVFFGIYPAVI).

The protein belongs to the complex I subunit 4 family.

Its subcellular location is the mitochondrion membrane. It catalyses the reaction a ubiquinone + NADH + 5 H(+)(in) = a ubiquinol + NAD(+) + 4 H(+)(out). Functionally, core subunit of the mitochondrial membrane respiratory chain NADH dehydrogenase (Complex I) that is believed to belong to the minimal assembly required for catalysis. Complex I functions in the transfer of electrons from NADH to the respiratory chain. The immediate electron acceptor for the enzyme is believed to be ubiquinone. In Trichophyton rubrum (Athlete's foot fungus), this protein is NADH-ubiquinone oxidoreductase chain 4 (ND4).